The chain runs to 288 residues: Probable ketoamine kinase SAOUHSC_02908 (288 aa).

86-88 is an ATP binding site; it reads TYL. Residue Asp191 is the Proton acceptor of the active site.

The protein belongs to the fructosamine kinase family.

It carries out the reaction N(6)-(D-ribulosyl)-L-lysine + ATP = N(6)-(3-O-phospho-D-ribulosyl)-L-lysine + ADP + H(+). The enzyme catalyses N(6)-(D-erythrulosyl)-L-lysine + ATP = N(6)-(3-O-phospho-D-erythrulosyl)-L-lysine + ADP + H(+). The catalysed reaction is N(6)-D-ribulosyl-L-lysyl-[protein] + ATP = N(6)-(3-O-phospho-D-ribulosyl)-L-lysyl-[protein] + ADP + H(+). It catalyses the reaction N(6)-(D-erythrulosyl)-L-lysyl-[protein] + ATP = N(6)-(3-O-phospho-D-erythrulosyl)-L-lysyl-[protein] + ADP + H(+). In terms of biological role, ketoamine kinase that phosphorylates ketoamines, such as erythruloselysine and ribuloselysine, on the third carbon of the sugar moiety to generate ketoamine 3-phosphate. Has higher activity on free lysine (erythruloselysine and ribuloselysine), than on ribuloselysine and erythruloselysine residues on glycated proteins. The sequence is that of Probable ketoamine kinase SAOUHSC_02908 from Staphylococcus aureus (strain NCTC 8325 / PS 47).